Here is a 377-residue protein sequence, read N- to C-terminus: DNA methyltransferase CcrM (377 aa).

Residues 271-373 (LGKAELTVMT…LRKIIREQMA (103 aa)) enclose the RAMA domain.

The protein belongs to the N(4)/N(6)-methyltransferase family.

The enzyme catalyses a 2'-deoxyadenosine in DNA + S-adenosyl-L-methionine = an N(6)-methyl-2'-deoxyadenosine in DNA + S-adenosyl-L-homocysteine + H(+). In terms of biological role, a beta subtype methylase that recognizes the double-stranded sequence 5'-GANTC-3' and methylates on A-2 on both strands. Overexpression from a moderate-copy number plasmid (10-12 copies/cell) leads to enlarged, branched cells, many with 3-5 genome equivalents. Contributes to the accurate cell-cycle control of DNA replication and cellular morphology. The sequence is that of DNA methyltransferase CcrM from Brucella abortus (strain 2308).